Here is a 511-residue protein sequence, read N- to C-terminus: Ectonucleoside triphosphate diphosphohydrolase 1 (511 aa).

The Cytoplasmic segment spans residues 1-16; it reads MEDIKDSKVKRFCSKN. Residues 17 to 37 traverse the membrane as a helical segment; the sequence is ILIILGFSSVLAVIALIAVGL. Topologically, residues 38–478 are extracellular; sequence THNKPLPENV…LSPPLPHSTY (441 aa). An N-terminal lobe region spans residues 46–171; the sequence is NVKYGIVLDA…DFQGAKIITG (126 aa). N73 carries N-linked (GlcNAc...) asparagine glycosylation. An intrachain disulfide couples C84 to C108. E174 functions as the Proton acceptor in the catalytic mechanism. A C-terminal lobe region spans residues 205–441; it reads QATFGALDLG…GTSWDQIHFM (237 aa). 3 N-linked (GlcNAc...) asparagine glycosylation sites follow: N226, N291, and N333. Disulfide bonds link C254/C300 and C281/C324. Residues C337 and C342 are joined by a disulfide bond. N374 carries an N-linked (GlcNAc...) asparagine glycan. A disulfide bond links C391 and C414. 2 N-linked (GlcNAc...) asparagine glycosylation sites follow: N429 and N458. A helical transmembrane segment spans residues 479–499; sequence ISLMVLFSLVLVAMVITGLFI. Residues 500-511 lie on the Cytoplasmic side of the membrane; the sequence is FSKPSYFWKEAV.

This sequence belongs to the GDA1/CD39 NTPase family. In terms of assembly, homodimer; disulfide-linked. Ca(2+) is required as a cofactor. Mg(2+) serves as cofactor. In terms of processing, N-glycosylated. Post-translationally, the N-terminus is blocked. Palmitoylated on Cys-13; which is required for caveola targeting. In terms of tissue distribution, expressed in primary neurons and astrocytes, kidney, liver, muscle, thymus, lung and spleen.

It is found in the membrane. Its subcellular location is the caveola. It carries out the reaction a ribonucleoside 5'-triphosphate + 2 H2O = a ribonucleoside 5'-phosphate + 2 phosphate + 2 H(+). The catalysed reaction is a ribonucleoside 5'-triphosphate + H2O = a ribonucleoside 5'-diphosphate + phosphate + H(+). The enzyme catalyses a ribonucleoside 5'-diphosphate + H2O = a ribonucleoside 5'-phosphate + phosphate + H(+). It catalyses the reaction ATP + 2 H2O = AMP + 2 phosphate + 2 H(+). It carries out the reaction ATP + H2O = ADP + phosphate + H(+). The catalysed reaction is ADP + H2O = AMP + phosphate + H(+). The enzyme catalyses CTP + 2 H2O = CMP + 2 phosphate + 2 H(+). It catalyses the reaction CTP + H2O = CDP + phosphate + H(+). It carries out the reaction CDP + H2O = CMP + phosphate + H(+). The catalysed reaction is GTP + 2 H2O = GMP + 2 phosphate + 2 H(+). The enzyme catalyses GTP + H2O = GDP + phosphate + H(+). It catalyses the reaction GDP + H2O = GMP + phosphate + H(+). It carries out the reaction ITP + 2 H2O = IMP + 2 phosphate + 2 H(+). The catalysed reaction is ITP + H2O = IDP + phosphate + H(+). The enzyme catalyses IDP + H2O = IMP + phosphate + H(+). It catalyses the reaction UTP + 2 H2O = UMP + 2 phosphate + 2 H(+). It carries out the reaction UTP + H2O = UDP + phosphate + H(+). The catalysed reaction is UDP + H2O = UMP + phosphate + H(+). Its function is as follows. Catalyzes the hydrolysis of both di- and triphosphate nucleotides (NDPs and NTPs) and hydrolyze NTPs to nucleotide monophosphates (NMPs) in two distinct successive phosphate-releasing steps, with NDPs as intermediates and participates in the regulation of extracellular levels of nucleotides. By hydrolyzing proinflammatory ATP and platelet-activating ADP to AMP, it blocks platelet aggregation and supports blood flow. The protein is Ectonucleoside triphosphate diphosphohydrolase 1 of Rattus norvegicus (Rat).